Reading from the N-terminus, the 142-residue chain is Aspartate 1-decarboxylase (142 aa).

The active-site Schiff-base intermediate with substrate; via pyruvic acid is S25. S25 carries the pyruvic acid (Ser) modification. T57 is a substrate binding site. Catalysis depends on Y58, which acts as the Proton donor. 73 to 75 (GAA) contacts substrate.

It belongs to the PanD family. Heterooctamer of four alpha and four beta subunits. It depends on pyruvate as a cofactor. Is synthesized initially as an inactive proenzyme, which is activated by self-cleavage at a specific serine bond to produce a beta-subunit with a hydroxyl group at its C-terminus and an alpha-subunit with a pyruvoyl group at its N-terminus.

It is found in the cytoplasm. It catalyses the reaction L-aspartate + H(+) = beta-alanine + CO2. Its pathway is cofactor biosynthesis; (R)-pantothenate biosynthesis; beta-alanine from L-aspartate: step 1/1. Its function is as follows. Catalyzes the pyruvoyl-dependent decarboxylation of aspartate to produce beta-alanine. The protein is Aspartate 1-decarboxylase of Arthrobacter sp. (strain FB24).